The sequence spans 668 residues: Endoplasmic reticulum oxidoreductin-1 (668 aa).

An N-terminal signal peptide occupies residues methionine 1 to cysteine 22. Intrachain disulfides connect cysteine 79-cysteine 413, cysteine 89-cysteine 94, cysteine 150-cysteine 352, and cysteine 416-cysteine 419. The disordered stretch occupies residues lysine 116–leucine 142. Arginine 186, threonine 188, tryptophan 199, serine 282, and histidine 285 together coordinate FAD. N-linked (GlcNAc...) asparagine glycosylation is found at asparagine 298 and asparagine 307. Arginine 314 contacts FAD. Asparagine 406 carries an N-linked (GlcNAc...) asparagine glycan. The active-site Nucleophile is cysteine 416. Cysteine 419 is an active-site residue. Residue asparagine 443 is glycosylated (N-linked (GlcNAc...) asparagine). 2 disordered regions span residues valine 488 to lysine 519 and glycine 554 to phenylalanine 597. Polar residues predominate over residues glycine 494–serine 509. Residues aspartate 570–phenylalanine 581 show a composition bias toward acidic residues.

Belongs to the EROs family. As to quaternary structure, may function both as a monomer and a homodimer. FAD is required as a cofactor.

The protein resides in the endoplasmic reticulum membrane. In terms of biological role, essential oxidoreductase that oxidizes proteins in the endoplasmic reticulum to produce disulfide bonds. Acts by oxidizing directly pdi1 isomerase through a direct disulfide exchange. Does not act as a direct oxidant of folding substrate, but relies on pdi1 to transfer oxidizing equivalent. Does not oxidize all pdi related proteins, suggesting that it can discriminate between pdi1 and related proteins. Its reoxidation probably involves electron transfer to molecular oxygen via FAD. Acts independently of glutathione. May be responsible for a significant proportion of reactive oxygen species (ROS) in the cell, thereby being a source of oxidative stress. In Neurospora crassa (strain ATCC 24698 / 74-OR23-1A / CBS 708.71 / DSM 1257 / FGSC 987), this protein is Endoplasmic reticulum oxidoreductin-1 (ero-1).